The chain runs to 313 residues: Porphobilinogen deaminase (313 aa).

Cys242 carries the S-(dipyrrolylmethanemethyl)cysteine modification.

It belongs to the HMBS family. As to quaternary structure, monomer. Dipyrromethane serves as cofactor.

The catalysed reaction is 4 porphobilinogen + H2O = hydroxymethylbilane + 4 NH4(+). It functions in the pathway porphyrin-containing compound metabolism; protoporphyrin-IX biosynthesis; coproporphyrinogen-III from 5-aminolevulinate: step 2/4. Functionally, tetrapolymerization of the monopyrrole PBG into the hydroxymethylbilane pre-uroporphyrinogen in several discrete steps. The polypeptide is Porphobilinogen deaminase (Escherichia coli (strain SE11)).